Consider the following 197-residue polypeptide: MDFIFPLISYLLGAIPFGLLIGKLAGRDVRLEGSKNIGATNVSRILGKKLGFATLLCDSLKGFLPMVLAATLLPSSENRELIVCLSGVMGVLGHMFPVYLGFKGGKGVATGLGVFLFLSPAAIAISLGVFAASVFFSGFVSVGSLLASGLIPLWLYLLGASQLKIITAGFVALLIWIKHRKNIKRLMTGTEKSWKKK.

Transmembrane regions (helical) follow at residues 1 to 21 (MDFIFPLISYLLGAIPFGLLI), 50 to 70 (LGFATLLCDSLKGFLPMVLAA), 82 to 102 (IVCLSGVMGVLGHMFPVYLGF), 112 to 132 (LGVFLFLSPAAIAISLGVFAA), and 159 to 179 (GASQLKIITAGFVALLIWIKH).

Belongs to the PlsY family. In terms of assembly, probably interacts with PlsX.

Its subcellular location is the cell inner membrane. The enzyme catalyses an acyl phosphate + sn-glycerol 3-phosphate = a 1-acyl-sn-glycero-3-phosphate + phosphate. The protein operates within lipid metabolism; phospholipid metabolism. In terms of biological role, catalyzes the transfer of an acyl group from acyl-phosphate (acyl-PO(4)) to glycerol-3-phosphate (G3P) to form lysophosphatidic acid (LPA). This enzyme utilizes acyl-phosphate as fatty acyl donor, but not acyl-CoA or acyl-ACP. The polypeptide is Glycerol-3-phosphate acyltransferase (Desulfotalea psychrophila (strain LSv54 / DSM 12343)).